Consider the following 153-residue polypeptide: MRLNELSPAPGSKKDRKRVGRGDAGRGNYSGRGMKGQKARSGGATRPGFEGGQLPIYLRLPRKRGFFNPFRIEYTVVNIEQLNIFEAGTEVTPETMLAAGLIRNFVKPVKILAAGHIDRALEVSAHKFSQAAKAQIEAAGGKVQEIDYAAEIE.

Residues 1-48 (MRLNELSPAPGSKKDRKRVGRGDAGRGNYSGRGMKGQKARSGGATRPG) form a disordered region.

This sequence belongs to the universal ribosomal protein uL15 family. Part of the 50S ribosomal subunit.

Binds to the 23S rRNA. This chain is Large ribosomal subunit protein uL15, found in Dehalococcoides mccartyi (strain ATCC BAA-2266 / KCTC 15142 / 195) (Dehalococcoides ethenogenes (strain 195)).